The sequence spans 172 residues: C-phycocyanin beta chain (172 aa).

Asn-72 carries the post-translational modification N4-methylasparagine. Residues Cys-82 and Cys-153 each coordinate (2R,3E)-phycocyanobilin.

It belongs to the phycobiliprotein family. As to quaternary structure, heterodimer of an alpha and a beta subunit, which further assembles into trimers and the trimers into hexamers. The basic functional unit of phycobiliproteins is a ring-shaped hexamer formed from two back-to-back trimers contacting via the alpha chain subunits. The trimers are composed of alpha/beta subunit heterodimers arranged around a three-fold axis of symmetry. The phycoerythrins also contain a gamma subunit which is located in the center of the hexamer. In terms of processing, contains two covalently linked phycocyanobilin chromophores.

The protein localises to the plastid. Its subcellular location is the cyanelle thylakoid membrane. Its function is as follows. Light-harvesting photosynthetic bile pigment-protein from the phycobiliprotein complex (phycobilisome, PBS). Phycocyanin is the major phycobiliprotein in the PBS rod. This is C-phycocyanin beta chain (cpcB) from Cyanophora paradoxa.